The primary structure comprises 1089 residues: SUMO-specific isopeptidase USPL1 (1089 aa).

A disordered region spans residues 90 to 128 (LISPDSEDCPTPSKPQKRKRLETNCRNSPLPVHSKKTRS). Residues 215-488 (VQWKNTQALC…ETHIVIWERK (274 aa)) form the USP domain. The active-site Nucleophile is C224. The tract at residues 224 to 483 (CWLDCILSAL…EVPASETHIV (260 aa)) is SUMO-binding. The Proton acceptor role is filled by H444. 4 disordered regions span residues 687–739 (DSQT…KEDQ), 791–817 (ISRR…SPPL), 835–868 (LREQ…AAED), and 891–928 (LISS…CGSP). Residues 719 to 733 (TASSKTVAARSAQNQ) show a composition bias toward polar residues. Over residues 791 to 803 (ISRRSKRMSRKAK) the composition is skewed to basic residues. S894 carries the post-translational modification Phosphoserine. Residues 895 to 907 (PHREPSLSDHSEP) are compositionally biased toward basic and acidic residues.

Belongs to the peptidase C19 family. In terms of assembly, interacts with ELL.

Its subcellular location is the nucleus. It localises to the cajal body. Its function is as follows. SUMO-specific isopeptidase involved in protein desumoylation. Specifically binds SUMO proteins with a higher affinity for SUMO2 and SUMO3 which it cleaves more efficiently. Also able to process full-length SUMO proteins to their mature forms. Plays a key role in RNA polymerase-II-mediated snRNA transcription in the Cajal bodies. Is a component of complexes that can bind to U snRNA genes. This is SUMO-specific isopeptidase USPL1 (Uspl1) from Mus musculus (Mouse).